The following is a 429-amino-acid chain: Probable exoglucanase GH6D (429 aa).

An N-terminal signal peptide occupies residues 1-17 (MRAVYAILAGLLATGSA). Substrate-binding residues include Trp-75 and Ser-77. Catalysis depends on proton donor residues Asp-115 and Asp-162. Asn-206 and Trp-209 together coordinate substrate. N-linked (GlcNAc...) asparagine glycosylation occurs at Asn-237. Residues Asn-240, Trp-300, Lys-328, and Glu-332 each contribute to the substrate site. The interval 240 to 261 (NYNPYSTNNPPPYTAGSPSADE) is disordered. The disordered stretch occupies residues 362-390 (PEIRADGGGGGSPAPGPSSTAVAPSPSAT). The span at 378–390 (PSSTAVAPSPSAT) shows a compositional bias: low complexity. The region spanning 394–429 (NCAARWAQCGGQGWTGPTCCAQGTCQASNQWYSQCL) is the CBM1 domain.

It belongs to the glycosyl hydrolase 6 (cellulase B) family.

The protein resides in the secreted. Functionally, probable exoglucanase that may play an important function in biomass degradation by catalyzing the hydrolysis of cellulose. The polypeptide is Probable exoglucanase GH6D (Podospora anserina (strain S / ATCC MYA-4624 / DSM 980 / FGSC 10383) (Pleurage anserina)).